The sequence spans 106 residues: Large ribosomal subunit protein eL42 (106 aa).

The protein belongs to the eukaryotic ribosomal protein eL42 family.

The protein is Large ribosomal subunit protein eL42 (RPL44) of Debaryomyces hansenii (strain ATCC 36239 / CBS 767 / BCRC 21394 / JCM 1990 / NBRC 0083 / IGC 2968) (Yeast).